A 572-amino-acid chain; its full sequence is Urease subunit alpha (572 aa).

Residues 136-572 enclose the Urease domain; it reads GGIDTHIHFI…VPLGQRYFLF (437 aa). H141, H143, and K224 together coordinate Ni(2+). K224 carries the N6-carboxylysine modification. H226 serves as a coordination point for substrate. Ni(2+) is bound by residues H253 and H279. The active-site Proton donor is the H327. Ni(2+) is bound at residue D367.

The protein belongs to the metallo-dependent hydrolases superfamily. Urease alpha subunit family. Heterotrimer of UreA (gamma), UreB (beta) and UreC (alpha) subunits. Three heterotrimers associate to form the active enzyme. It depends on Ni cation as a cofactor. In terms of processing, carboxylation allows a single lysine to coordinate two nickel ions.

It is found in the cytoplasm. It catalyses the reaction urea + 2 H2O + H(+) = hydrogencarbonate + 2 NH4(+). Its pathway is nitrogen metabolism; urea degradation; CO(2) and NH(3) from urea (urease route): step 1/1. This Haemophilus influenzae (strain 86-028NP) protein is Urease subunit alpha.